The chain runs to 77 residues: Ribonuclease P protein component 1 (77 aa).

The protein belongs to the eukaryotic/archaeal RNase P protein component 1 family. Consists of a catalytic RNA component and at least 4-5 protein subunits.

The protein resides in the cytoplasm. It carries out the reaction Endonucleolytic cleavage of RNA, removing 5'-extranucleotides from tRNA precursor.. In terms of biological role, part of ribonuclease P, a protein complex that generates mature tRNA molecules by cleaving their 5'-ends. The sequence is that of Ribonuclease P protein component 1 from Sulfurisphaera tokodaii (strain DSM 16993 / JCM 10545 / NBRC 100140 / 7) (Sulfolobus tokodaii).